We begin with the raw amino-acid sequence, 447 residues long: N-succinylarginine dihydrolase (447 aa).

Substrate is bound by residues 19 to 28, N110, and 137 to 138; these read AGLSFGNEAS and HR. E174 is a catalytic residue. Position 212 (R212) interacts with substrate. Residue H248 is part of the active site. Residues D250 and N359 each coordinate substrate. C365 acts as the Nucleophile in catalysis.

Belongs to the succinylarginine dihydrolase family. In terms of assembly, homodimer.

The enzyme catalyses N(2)-succinyl-L-arginine + 2 H2O + 2 H(+) = N(2)-succinyl-L-ornithine + 2 NH4(+) + CO2. The protein operates within amino-acid degradation; L-arginine degradation via AST pathway; L-glutamate and succinate from L-arginine: step 2/5. Catalyzes the hydrolysis of N(2)-succinylarginine into N(2)-succinylornithine, ammonia and CO(2). This is N-succinylarginine dihydrolase from Salmonella typhi.